We begin with the raw amino-acid sequence, 337 residues long: Undecaprenyl-phosphate 4-deoxy-4-formamido-L-arabinose transferase (337 aa).

2 consecutive transmembrane segments (helical) span residues 235-255 (LSIIGFSMALLGVLFAALLIV) and 270-290 (FVLFAVLFVFTGGQFIGMGLL).

Belongs to the glycosyltransferase 2 family.

The protein localises to the cell inner membrane. The catalysed reaction is UDP-4-deoxy-4-formamido-beta-L-arabinose + di-trans,octa-cis-undecaprenyl phosphate = 4-deoxy-4-formamido-alpha-L-arabinopyranosyl di-trans,octa-cis-undecaprenyl phosphate + UDP. The protein operates within glycolipid biosynthesis; 4-amino-4-deoxy-alpha-L-arabinose undecaprenyl phosphate biosynthesis; 4-amino-4-deoxy-alpha-L-arabinose undecaprenyl phosphate from UDP-4-deoxy-4-formamido-beta-L-arabinose and undecaprenyl phosphate: step 1/2. Its pathway is bacterial outer membrane biogenesis; lipopolysaccharide biosynthesis. Its function is as follows. Catalyzes the transfer of 4-deoxy-4-formamido-L-arabinose from UDP to undecaprenyl phosphate. The modified arabinose is attached to lipid A and is required for resistance to polymyxin and cationic antimicrobial peptides. The sequence is that of Undecaprenyl-phosphate 4-deoxy-4-formamido-L-arabinose transferase from Pseudomonas syringae pv. syringae (strain B728a).